The sequence spans 156 residues: Protein Smg homolog (156 aa).

Belongs to the Smg family.

The chain is Protein Smg homolog from Halorhodospira halophila (strain DSM 244 / SL1) (Ectothiorhodospira halophila (strain DSM 244 / SL1)).